Consider the following 397-residue polypeptide: MVKETTYYDVLGVKPNATQEELKKAYRKLALKYHPDKNPNEGEKFKQISQAYEVLADSKKRELYDKGGEQAIKEGGAGGGFGSPMDIFDMFFGGGGRMQRERRGKNVVHQLSVTLEDLYNGATRKLALQKNVICDKCEGRGGKKGAVECCPNCRGTGMQIRIHQIGPGMVQQIQSVCMECQGHGERISPKDRCKSCNGRKIVREKKILEVHIDKGMKDGQKITFHGEGDQEPGLEPGDIIIVLDQKDHAVFTRRGEDLFMCMDIQLVEALCGFQKPISTLDNRTIVITSHPGQIVKHGDIKCVLNEGMPIYRRPYEKGRLIIEFKVNFPENGFLSPDKLSLLEKLLPERKEVEETDEMDQVELVDFDPNQERRRHYNGEAYEDDEHHPRGGVQCQTS.

The 63-residue stretch at 6 to 68 (TYYDVLGVKP…KKRELYDKGG (63 aa)) folds into the J domain. Lys66 carries the post-translational modification N6-acetyllysine. Ser83 is modified (phosphoserine). A CR-type zinc finger spans residues 121 to 205 (GATRKLALQK…CNGRKIVREK (85 aa)). Residues Cys134, Cys137, Cys150, Cys153, Cys177, Cys180, Cys193, and Cys196 each coordinate Zn(2+). CXXCXGXG motif repeat units lie at residues 134–141 (CDKCEGRG), 150–157 (CPNCRGTG), 177–184 (CMECQGHG), and 193–200 (CKSCNGRK). Ser335 is subject to Phosphoserine. Positions 352–397 (VEETDEMDQVELVDFDPNQERRRHYNGEAYEDDEHHPRGGVQCQTS) are disordered. Positions 353-365 (EETDEMDQVELVD) are enriched in acidic residues. Tyr381 is subject to Phosphotyrosine. Cys394 is subject to Cysteine methyl ester. Cys394 is lipidated: S-farnesyl cysteine. Residues 395–397 (QTS) constitute a propeptide, removed in mature form.

As to quaternary structure, identified in a complex with HSPA1B and BAX. Interacts with RNF207.

The protein resides in the membrane. It localises to the cytoplasm. It is found in the microsome. Its subcellular location is the mitochondrion. The protein localises to the nucleus. The protein resides in the perinuclear region. In terms of biological role, co-chaperone for HSPA8/Hsc70. Plays a role in protein transport into mitochondria via its role as co-chaperone. Stimulates ATP hydrolysis, but not the folding of unfolded proteins mediated by HSPA1A (in vitro). Promotes apoptosis in response to cellular stress mediated by exposure to anisomycin or UV. Functions as co-chaperone for HSPA1B and negatively regulates the translocation of BAX from the cytosol to mitochondria in response to cellular stress, thereby protecting cells against apoptosis. The sequence is that of DnaJ homolog subfamily A member 1 (Dnaja1) from Mus musculus (Mouse).